We begin with the raw amino-acid sequence, 225 residues long: Thymidylate kinase (225 aa).

9–16 (GIEGCGKT) lines the ATP pocket.

This sequence belongs to the thymidylate kinase family.

It catalyses the reaction dTMP + ATP = dTDP + ADP. Its function is as follows. Phosphorylation of dTMP to form dTDP in both de novo and salvage pathways of dTTP synthesis. The polypeptide is Thymidylate kinase (Citrifermentans bemidjiense (strain ATCC BAA-1014 / DSM 16622 / JCM 12645 / Bem) (Geobacter bemidjiensis)).